Reading from the N-terminus, the 341-residue chain is GTPase Obg (341 aa).

The region spanning 1-159 is the Obg domain; the sequence is MKFVDEALIK…RNLRLELRVL (159 aa). The disordered stretch occupies residues 128 to 150; the sequence is TRYKSSVNRSPRQTTPGSPGESR. The segment covering 129–144 has biased composition (polar residues); the sequence is RYKSSVNRSPRQTTPG. The region spanning 160–334 is the OBG-type G domain; sequence ADVGLLGLPN…LCYALMQLID (175 aa). GTP contacts are provided by residues 166-173, 191-195, 213-216, 283-286, and 315-317; these read GLPNAGKS, FTTLH, DIPG, NKID, and SAI. Ser173 and Thr193 together coordinate Mg(2+).

It belongs to the TRAFAC class OBG-HflX-like GTPase superfamily. OBG GTPase family. Monomer. Requires Mg(2+) as cofactor.

It localises to the cytoplasm. An essential GTPase which binds GTP, GDP and possibly (p)ppGpp with moderate affinity, with high nucleotide exchange rates and a fairly low GTP hydrolysis rate. Plays a role in control of the cell cycle, stress response, ribosome biogenesis and in those bacteria that undergo differentiation, in morphogenesis control. The polypeptide is GTPase Obg (Legionella pneumophila (strain Paris)).